Here is a 349-residue protein sequence, read N- to C-terminus: Dihydroorotate dehydrogenase (quinone) (349 aa).

FMN is bound by residues 65–69 and A89; that span reads AGFDK. Residue K69 coordinates substrate. A substrate-binding site is contributed by 114-118; that stretch reads NRMGF. FMN contacts are provided by N143 and N176. Residue N176 coordinates substrate. S179 (nucleophile) is an active-site residue. N181 is a substrate binding site. 2 residues coordinate FMN: K212 and T240. Residue 241 to 242 coordinates substrate; it reads NT. The disordered stretch occupies residues 244 to 265; the sequence is TERPESLSHPHAGEQGGLSGAP. Basic and acidic residues predominate over residues 245-255; sequence ERPESLSHPHA. Residues G263, G290, and 311 to 312 contribute to the FMN site; that span reads YT.

It belongs to the dihydroorotate dehydrogenase family. Type 2 subfamily. As to quaternary structure, monomer. FMN is required as a cofactor.

The protein resides in the cell membrane. The catalysed reaction is (S)-dihydroorotate + a quinone = orotate + a quinol. The protein operates within pyrimidine metabolism; UMP biosynthesis via de novo pathway; orotate from (S)-dihydroorotate (quinone route): step 1/1. Its function is as follows. Catalyzes the conversion of dihydroorotate to orotate with quinone as electron acceptor. The chain is Dihydroorotate dehydrogenase (quinone) from Halobacterium salinarum (strain ATCC 29341 / DSM 671 / R1).